Reading from the N-terminus, the 329-residue chain is DNA repair and recombination protein RadA (329 aa).

Residue 107–114 (GEFGSGKS) coordinates ATP.

It belongs to the eukaryotic RecA-like protein family.

Involved in DNA repair and in homologous recombination. Binds and assemble on single-stranded DNA to form a nucleoprotein filament. Hydrolyzes ATP in a ssDNA-dependent manner and promotes DNA strand exchange between homologous DNA molecules. This chain is DNA repair and recombination protein RadA, found in Methanocorpusculum labreanum (strain ATCC 43576 / DSM 4855 / Z).